Reading from the N-terminus, the 544-residue chain is uncharacterized protein (544 aa).

An N-terminal signal peptide occupies residues 1–34 (MIARRMLCARPWGPSCVVCALCGALAALVPAVGA). The tract at residues 38–69 (AVPAPGTPAPPAHTASEAVPPAPEPRAEGEQP) is disordered.

This sequence belongs to the TP096X family.

This is an uncharacterized protein from Treponema pallidum (strain Nichols).